The following is a 731-amino-acid chain: Elongation factor 2 (731 aa).

Residues 19–234 (EYIRNIGICA…DIIDYCNEGK (216 aa)) form the tr-type G domain. GTP-binding positions include 28–35 (AHIDHGKT), 94–98 (DTPGH), and 148–151 (NKVD). A Diphthamide modification is found at His598.

This sequence belongs to the TRAFAC class translation factor GTPase superfamily. Classic translation factor GTPase family. EF-G/EF-2 subfamily.

The protein resides in the cytoplasm. Catalyzes the GTP-dependent ribosomal translocation step during translation elongation. During this step, the ribosome changes from the pre-translocational (PRE) to the post-translocational (POST) state as the newly formed A-site-bound peptidyl-tRNA and P-site-bound deacylated tRNA move to the P and E sites, respectively. Catalyzes the coordinated movement of the two tRNA molecules, the mRNA and conformational changes in the ribosome. In Methanobrevibacter ruminantium (strain ATCC 35063 / DSM 1093 / JCM 13430 / OCM 146 / M1) (Methanobacterium ruminantium), this protein is Elongation factor 2.